The sequence spans 924 residues: Nodulation receptor kinase (924 aa).

An N-terminal signal peptide occupies residues Met-1 to Ser-29. Positions Glu-361–Ser-382 form a coiled coil. LRR repeat units lie at residues Val-406–Met-428, Lys-430–Ser-452, Leu-453–Leu-475, and His-477–Asn-498. Residues Phe-520–Phe-540 traverse the membrane as a helical segment. The Protein kinase domain maps to Glu-595–Ile-872. ATP-binding positions include Ile-601 to Val-609 and Lys-623. Asp-721 functions as the Proton acceptor in the catalytic mechanism.

The protein belongs to the protein kinase superfamily. Ser/Thr protein kinase family. In terms of processing, may be phosphorylated.

Its subcellular location is the membrane. The catalysed reaction is L-seryl-[protein] + ATP = O-phospho-L-seryl-[protein] + ADP + H(+). The enzyme catalyses L-threonyl-[protein] + ATP = O-phospho-L-threonyl-[protein] + ADP + H(+). In terms of biological role, involved in the perception of symbiotic fungi and bacteria and required for the calcium spiking. Part of the perception/transduction system leading to nodulation or mycorrhizal infection. The chain is Nodulation receptor kinase (NORK) from Pisum sativum (Garden pea).